The chain runs to 267 residues: Hydroxyethylthiazole kinase (267 aa).

Methionine 51 serves as a coordination point for substrate. Residues arginine 127 and serine 173 each contribute to the ATP site. Alanine 200 contacts substrate.

It belongs to the Thz kinase family. Requires Mg(2+) as cofactor.

The enzyme catalyses 5-(2-hydroxyethyl)-4-methylthiazole + ATP = 4-methyl-5-(2-phosphooxyethyl)-thiazole + ADP + H(+). It participates in cofactor biosynthesis; thiamine diphosphate biosynthesis; 4-methyl-5-(2-phosphoethyl)-thiazole from 5-(2-hydroxyethyl)-4-methylthiazole: step 1/1. Its function is as follows. Catalyzes the phosphorylation of the hydroxyl group of 4-methyl-5-beta-hydroxyethylthiazole (THZ). This Psychromonas ingrahamii (strain DSM 17664 / CCUG 51855 / 37) protein is Hydroxyethylthiazole kinase.